The chain runs to 298 residues: GTPase Era (298 aa).

An Era-type G domain is found at 8–176 (RCGRIAVIGR…VSDLLALLPE (169 aa)). Residues 16–23 (GRPNVGKS) are G1. 16–23 (GRPNVGKS) contacts GTP. The G2 stretch occupies residues 42–46 (QTTRH). The interval 63–66 (DTPG) is G3. Residues 63 to 67 (DTPGL) and 125 to 128 (NKID) each bind GTP. A G4 region spans residues 125–128 (NKID). Residues 155-157 (VSA) form a G5 region. A KH type-2 domain is found at 199–283 (VREQVMRQLG…FLETWVRVRK (85 aa)).

It belongs to the TRAFAC class TrmE-Era-EngA-EngB-Septin-like GTPase superfamily. Era GTPase family. In terms of assembly, monomer.

The protein resides in the cytoplasm. It localises to the cell inner membrane. Functionally, an essential GTPase that binds both GDP and GTP, with rapid nucleotide exchange. Plays a role in 16S rRNA processing and 30S ribosomal subunit biogenesis and possibly also in cell cycle regulation and energy metabolism. This chain is GTPase Era, found in Xylella fastidiosa (strain M12).